The primary structure comprises 272 residues: Putative hydro-lyase AZC_4080 (272 aa).

Belongs to the D-glutamate cyclase family.

This Azorhizobium caulinodans (strain ATCC 43989 / DSM 5975 / JCM 20966 / LMG 6465 / NBRC 14845 / NCIMB 13405 / ORS 571) protein is Putative hydro-lyase AZC_4080.